A 139-amino-acid polypeptide reads, in one-letter code: MLERIGISLEDGLLEQFDKLIAEKGYVNRSEAVRDLIRDALVQRAFTESSGREERVAVVTLVYDHDSSSLAQKLAHIQHENHRAVVSALHVHMDAHNCLEVLVLRGRGKDVVAMGESLVATKGVKYGKLVPATAGHDLR.

His79, His90, His92, and Cys98 together coordinate Ni(2+).

The protein belongs to the transcriptional regulatory CopG/NikR family. It depends on Ni(2+) as a cofactor.

Functionally, transcriptional regulator. This Anaeromyxobacter dehalogenans (strain 2CP-C) protein is Putative nickel-responsive regulator.